We begin with the raw amino-acid sequence, 217 residues long: Translation initiation factor IF-3 (217 aa).

The tract at residues 170 to 217 (KKTEAMAEARQAQEARKADAKANPGKSQNAAETDDAEAEAPAEAPAEA) is disordered. The segment covering 172–189 (TEAMAEARQAQEARKADA) has biased composition (basic and acidic residues).

The protein belongs to the IF-3 family. In terms of assembly, monomer.

The protein resides in the cytoplasm. IF-3 binds to the 30S ribosomal subunit and shifts the equilibrium between 70S ribosomes and their 50S and 30S subunits in favor of the free subunits, thus enhancing the availability of 30S subunits on which protein synthesis initiation begins. In Streptomyces coelicolor (strain ATCC BAA-471 / A3(2) / M145), this protein is Translation initiation factor IF-3.